A 130-amino-acid chain; its full sequence is Cytochrome c-type biogenesis protein CcmE (130 aa).

Topologically, residues 1-7 are cytoplasmic; that stretch reads MKKKHKR. The chain crosses the membrane as a helical; Signal-anchor for type II membrane protein span at residues 8 to 28; the sequence is LLITSGIFCFLSCAVFFILTT. Residues 29 to 130 lie on the Extracellular side of the membrane; the sequence is LKENISFFYT…DENYKPKVLK (102 aa). 2 residues coordinate heme: histidine 120 and tyrosine 124.

The protein belongs to the CcmE/CycJ family.

It localises to the cell membrane. Its function is as follows. Heme chaperone required for the biogenesis of c-type cytochromes. Transiently binds heme delivered by CcmC and transfers the heme to apo-cytochromes in a process facilitated by CcmF and CcmH. This Wolbachia pipientis subsp. Culex pipiens (strain wPip) protein is Cytochrome c-type biogenesis protein CcmE.